We begin with the raw amino-acid sequence, 125 residues long: Outer membrane protein assembly factor BamE (125 aa).

The first 17 residues, M1 to A17, serve as a signal peptide directing secretion. A lipid anchor (N-palmitoyl cysteine) is attached at C18. C18 carries S-diacylglycerol cysteine lipidation.

This sequence belongs to the BamE family. Part of the Bam complex.

It is found in the cell outer membrane. Part of the outer membrane protein assembly complex, which is involved in assembly and insertion of beta-barrel proteins into the outer membrane. This Neisseria meningitidis serogroup B (strain ATCC BAA-335 / MC58) protein is Outer membrane protein assembly factor BamE.